Here is a 496-residue protein sequence, read N- to C-terminus: Cobyric acid synthase (496 aa).

Residues 264–458 (HTRIAVVAYP…LHGLFEDAAV (195 aa)) enclose the GATase cobBQ-type domain. The active-site Nucleophile is the Cys-345. His-450 is a catalytic residue.

Belongs to the CobB/CobQ family. CobQ subfamily.

It functions in the pathway cofactor biosynthesis; adenosylcobalamin biosynthesis. Functionally, catalyzes amidations at positions B, D, E, and G on adenosylcobyrinic A,C-diamide. NH(2) groups are provided by glutamine, and one molecule of ATP is hydrogenolyzed for each amidation. This Acidovorax ebreus (strain TPSY) (Diaphorobacter sp. (strain TPSY)) protein is Cobyric acid synthase.